Here is a 269-residue protein sequence, read N- to C-terminus: Serine/arginine-rich splicing factor 5 (269 aa).

Residues 4-74 (CRVFIGRLNP…ERVTIEHARA (71 aa)) form the RRM 1 domain. Residues 73–105 (RARSRGGRGRGRYSDRFSSRRPRNDRRNAPPVR) are disordered. The segment covering 74–83 (ARSRGGRGRG) has biased composition (basic residues). S86 bears the Phosphoserine mark. In terms of domain architecture, RRM 2 spans 108–189 (NRLIVENLSS…SKRHRSRSRS (82 aa)). At K167 the chain carries N6-acetyllysine. The interval 174–269 (IKLIEGSKRH…SRSRSVDSGN (96 aa)) is disordered. Over residues 181–226 (KRHRSRSRSRSRTRSSSRSRSRSRSRRSKSYSRSRSRSRSRSKSRS) the composition is skewed to basic residues. A phosphoserine mark is found at S224, S226, S230, S247, and S250. Residues 239–251 (RGSSSRSKSPASV) show a composition bias toward low complexity.

This sequence belongs to the splicing factor SR family. Found in a pre-mRNA splicing complex with SRSF4/SFRS4, SRSF5/SFRS5, SNRNP70, SNRPA1, SRRM1 and SRRM2. Interacts with RBMY; the interaction inhibits SRSF5 pre-mRNA splicing. Interacts (via RS domain) with PHF5A (via N-terminus). Extensively phosphorylated on serine residues in the RS domain.

The protein localises to the nucleus. May be required for progression through G1 and entry into S phase of cell growth. May play a regulatory role in pre-mRNA splicing. Autoregulates its own expression. Plays a role in constitutive splicing and can modulate the selection of alternative splice sites. The chain is Serine/arginine-rich splicing factor 5 (Srsf5) from Mus musculus (Mouse).